The sequence spans 480 residues: Membrane-bound lytic murein transglycosylase F (480 aa).

The first 15 residues, 1-15 (MKKLLFVLLTITLLA), serve as a signal peptide directing secretion. The non-LT domain stretch occupies residues 16-259 (SCQKVSVEQT…HLNEKYFAHV (244 aa)). Positions 260 to 480 (KRFDYVDTRA…QENLSGAQPQ (221 aa)) are LT domain. Glu304 is a catalytic residue.

The protein in the N-terminal section; belongs to the bacterial solute-binding protein 3 family. In the C-terminal section; belongs to the transglycosylase Slt family.

It localises to the cell outer membrane. It catalyses the reaction Exolytic cleavage of the (1-&gt;4)-beta-glycosidic linkage between N-acetylmuramic acid (MurNAc) and N-acetylglucosamine (GlcNAc) residues in peptidoglycan, from either the reducing or the non-reducing ends of the peptidoglycan chains, with concomitant formation of a 1,6-anhydrobond in the MurNAc residue.. Murein-degrading enzyme that degrades murein glycan strands and insoluble, high-molecular weight murein sacculi, with the concomitant formation of a 1,6-anhydromuramoyl product. Lytic transglycosylases (LTs) play an integral role in the metabolism of the peptidoglycan (PG) sacculus. Their lytic action creates space within the PG sacculus to allow for its expansion as well as for the insertion of various structures such as secretion systems and flagella. The sequence is that of Membrane-bound lytic murein transglycosylase F from Shewanella sediminis (strain HAW-EB3).